Here is a 504-residue protein sequence, read N- to C-terminus: Maturase K (504 aa).

Belongs to the intron maturase 2 family. MatK subfamily.

It is found in the plastid. Its subcellular location is the chloroplast. Its function is as follows. Usually encoded in the trnK tRNA gene intron. Probably assists in splicing its own and other chloroplast group II introns. The protein is Maturase K of Berzelia lanuginosa (Buttonbush).